Consider the following 84-residue polypeptide: Molybdopterin synthase sulfur carrier subunit (84 aa).

G84 is subject to 1-thioglycine; alternate. Position 84 is a glycyl adenylate; alternate (G84).

This sequence belongs to the MoaD family. MOCS2A subfamily. Heterotetramer; composed of 2 small (MOCS2A) and 2 large (MOCS2B) subunits. In terms of processing, C-terminal thiocarboxylation occurs in 2 steps, it is first acyl-adenylated (-COAMP) via the hesA/moeB/thiF part of MOCS3, then thiocarboxylated (-COSH) via the rhodanese domain of MOCS3.

It is found in the cytoplasm. Its pathway is cofactor biosynthesis; molybdopterin biosynthesis. Its function is as follows. Acts as a sulfur carrier required for molybdopterin biosynthesis. Component of the molybdopterin synthase complex that catalyzes the conversion of precursor Z into molybdopterin by mediating the incorporation of 2 sulfur atoms into precursor Z to generate a dithiolene group. In the complex, serves as sulfur donor by being thiocarboxylated (-COSH) at its C-terminus by MOCS3. After interaction with MOCS2B, the sulfur is then transferred to precursor Z to form molybdopterin. This Caenorhabditis elegans protein is Molybdopterin synthase sulfur carrier subunit.